Reading from the N-terminus, the 383-residue chain is Ribosomal RNA large subunit methyltransferase G (383 aa).

It belongs to the methyltransferase superfamily. RlmG family.

It is found in the cytoplasm. The enzyme catalyses guanosine(1835) in 23S rRNA + S-adenosyl-L-methionine = N(2)-methylguanosine(1835) in 23S rRNA + S-adenosyl-L-homocysteine + H(+). Functionally, specifically methylates the guanine in position 1835 (m2G1835) of 23S rRNA. This is Ribosomal RNA large subunit methyltransferase G from Shewanella amazonensis (strain ATCC BAA-1098 / SB2B).